The primary structure comprises 185 residues: MTATASDDEAVTALALSAAKGNGRALEAFIKATQQDVWRFVAYLSDVGSADDLTQETFLRAIGAIPRFSARSSARTWLLAIARHVVADHIRHVRSRPRTTRGARPEHLIDGDRHARGFEDLVEVTTMIADLTTDQREALLLTQLLGLSYADAAAVCGCPVGTIRSRVARARDALLADAEPDDLTG.

The short motif at 52–65 is the Polymerase core binding element; that stretch reads DLTQETFLRAIGAI. Residues 149 to 168 constitute a DNA-binding region (H-T-H motif); sequence YADAAAVCGCPVGTIRSRVA.

It belongs to the sigma-70 factor family. ECF subfamily.

Its function is as follows. Sigma factors are initiation factors that promote the attachment of RNA polymerase to specific initiation sites and are then released. The chain is Probable RNA polymerase sigma-C factor (sigC) from Mycobacterium bovis (strain ATCC BAA-935 / AF2122/97).